The primary structure comprises 617 residues: Proline--tRNA ligase (617 aa).

Belongs to the class-II aminoacyl-tRNA synthetase family. ProS type 1 subfamily. Homodimer.

It is found in the cytoplasm. It carries out the reaction tRNA(Pro) + L-proline + ATP = L-prolyl-tRNA(Pro) + AMP + diphosphate. Functionally, catalyzes the attachment of proline to tRNA(Pro) in a two-step reaction: proline is first activated by ATP to form Pro-AMP and then transferred to the acceptor end of tRNA(Pro). As ProRS can inadvertently accommodate and process non-cognate amino acids such as alanine and cysteine, to avoid such errors it has two additional distinct editing activities against alanine. One activity is designated as 'pretransfer' editing and involves the tRNA(Pro)-independent hydrolysis of activated Ala-AMP. The other activity is designated 'posttransfer' editing and involves deacylation of mischarged Ala-tRNA(Pro). The misacylated Cys-tRNA(Pro) is not edited by ProRS. This Streptococcus pneumoniae (strain CGSP14) protein is Proline--tRNA ligase.